We begin with the raw amino-acid sequence, 797 residues long: Speckle targeted PIP5K1A-regulated poly(A) polymerase (797 aa).

The segment at 14–44 (FHCNLCHVNIPNRPSLEDHVKGKKHLHLLRL) adopts a Matrin-type zinc-finger fold. The 73-residue stretch at 54–126 (NSVFVSGFKA…LKLRVKPREK (73 aa)) folds into the RRM domain. Ser-205 serves as a coordination point for ATP. Asp-216 and Asp-218 together coordinate Mg(2+). UTP-binding residues include Asp-216, Asp-218, Asn-319, Arg-341, Tyr-363, and His-495. Asn-319 is an ATP binding site. One can recognise a PAP-associated domain in the interval 421-495 (DLCTLLFGFF…NVLDPFELNH (75 aa)). A KA1; binds the bulging loops of U6 snRNA but is dispensable for terminal uridylyltransferase activity region spans residues 544–787 (QSEAAASSQP…FLPKMAETIM (244 aa)). A disordered region spans residues 611–659 (EETQSLDKTDKSGSEMEVNNNRSLEDTNIQVKGEAGKKRPLSVEEGPST). Over residues 615–624 (SLDKTDKSGS) the composition is skewed to basic and acidic residues. Residues 627–640 (EVNNNRSLEDTNIQ) are compositionally biased toward polar residues.

This sequence belongs to the DNA polymerase type-B-like family. In terms of assembly, associates with the cleavage and polyadenylation specificity factor (CPSF) complex. It depends on Mg(2+) as a cofactor. Requires Mn(2+) as cofactor.

The protein resides in the nucleus. The protein localises to the nucleolus. It is found in the nucleus speckle. It catalyses the reaction RNA(n) + UTP = RNA(n)-3'-uridine ribonucleotide + diphosphate. The catalysed reaction is RNA(n) + ATP = RNA(n)-3'-adenine ribonucleotide + diphosphate. In terms of biological role, poly(A) polymerase that creates the 3'-poly(A) tail of specific pre-mRNAs. In addition to polyadenylation, it is also required for the 3'-end cleavage of pre-mRNAs: binds to the 3'UTR of targeted pre-mRNAs and promotes the recruitment and assembly of the CPSF complex on the 3'UTR of pre-mRNAs. In addition to adenylyltransferase activity, also has uridylyltransferase activity. However, the ATP ratio is higher than UTP in cells, suggesting that it functions primarily as a poly(A) polymerase. The chain is Speckle targeted PIP5K1A-regulated poly(A) polymerase (tut1) from Danio rerio (Zebrafish).